Consider the following 535-residue polypeptide: Keratin, type II cytoskeletal 79 (535 aa).

2 stretches are compositionally biased toward polar residues: residues 1 to 12 (MRSSVSRQTYST) and 28 to 38 (QARTSFSSVTV). Residues 1 to 53 (MRSSVSRQTYSTKGAFSSSSASGGGGSQARTSFSSVTVSRNSGRGGGPRCGPS) are disordered. The segment at 1 to 141 (MRSSVSRQTY…DPEIQRVRTE (141 aa)) is head. Positions 43 to 53 (GRGGGPRCGPS) are enriched in gly residues. The coil 1A stretch occupies residues 142–177 (EREQIKTLNNKFASFIDKVRFLEQQNKVLETKWALL). In terms of domain architecture, IF rod spans 142 to 457 (EREQIKTLNN…KLLESEESRM (316 aa)). A linker 1 region spans residues 178 to 198 (QEQGQKSGVTRNNLEPLFEHF). A coil 1B region spans residues 199–290 (INNLRGKLDN…HLYEEELSQV (92 aa)). The tract at residues 291–314 (QTHVSDTSVILSMDNNRNLDLDSI) is linker 12. The tract at residues 315-453 (IAEVKAQYEQ…ATYRKLLESE (139 aa)) is coil 2. The tract at residues 454 to 535 (ESRMSGECPS…TTVKTSSRRY (82 aa)) is tail.

This sequence belongs to the intermediate filament family. Heterotetramer of two type I and two type II keratins.

In Bos taurus (Bovine), this protein is Keratin, type II cytoskeletal 79 (KRT79).